The sequence spans 572 residues: Putative lysozyme-like protein (572 aa).

Positions 1 to 17 (MRLLLVLLALIFSVVSA) are cleaved as a signal peptide. Residues 145-165 (MSSSGSSSSSGSSGSSSSSSG) show a composition bias toward low complexity. Disordered stretches follow at residues 145 to 199 (MSSS…HGGG), 231 to 297 (SSSS…GGGV), 326 to 388 (ANSV…GERK), and 433 to 469 (AGSS…GGSG). The segment covering 166 to 185 (SSGGGSSGGGSGGGGGGSGL) has biased composition (gly residues). Positions 231–240 (SSSSADAGSS) are enriched in low complexity. Over residues 258–282 (STGGTGGSSGSSGGGSGGGGGGSGL) the composition is skewed to gly residues. Residues 326–358 (ANSVSSLAGSMSSSGSSSSSGSSGSSSSSSSSG) are compositionally biased toward low complexity. Residues 359–382 (SSGGSSGGGSSGGGSGGGGGGSGL) are compositionally biased toward gly residues. Low complexity predominate over residues 433-452 (AGSSSSSGSSGSSSSSSSSG). Positions 453 to 469 (SSGGSSGGSSGGGGGSG) are enriched in gly residues.

This sequence belongs to the dictyostelium lysozyme family.

This chain is Putative lysozyme-like protein (alyL), found in Dictyostelium discoideum (Social amoeba).